An 864-amino-acid polypeptide reads, in one-letter code: MNQEVKQSEVNLEQHTPMMQQYLRIKAQHPNELVFYRMGDFYELFYEDARKAAKLLDVTLTARGKSNGEPIPMAGVPYHAAENYLAKLVKLGVSVAICEQIGDPATTKGPVERKVMRVVTPGTVSDEALLDEHRDNWLVAISAHESQFGIACLDMGSGRFSVFEIEGEDALISEIERLRPAEILAPDLLTLPPGVRNKAGYRGRPEWEFDIESGLRSLCAHFATKDLDGFGCRGLTVALGAAGCLYAYAKETQRTELSHIASLVVENPDNTVSLDAATRRNLELDINLNGSEENTLFSVLNTTATAMGGRLLRRWINTPLRDLHTLHSRQSAIAALLENYRFEQVQQELKHIGDLERILGRIALRSARPRDLTRLLNSLAIYPQLQPLLKSAECETLATLASEINEFPGLVQELDKALVENPPVVIREGGVIAEGYDEELDELRGISTNAGEFLVKLETQERERTGLNTLKVGYNRVHGYFIEISKSQAEKAPAEYIRRQTLKNAERFITPELKTFEDKALSAKSRALSREKALYEQLIEKLNEHLRELQISAVAVAELDVLNTFAERAHALKLVKPEFRGEAGIEIEKGRHPVVEQVLTDPFIPNDLTLNAQQRMLIITGPNMGGKSTYMRQTALIVLLAQVGSYVPAEACRLGLVDRIFTRIGSSDDLAGGRSTFMVEMTETANILNNATSDSLVLMDEIGRGTSTYDGLSLAWACVEHLAEKLKSFTLFATHYFEITALPAQLPTVKNVHLDATEYQDNIVFLHNIQAGPASKSYGLQVAKLAGIPGAVLRQAKDVLHKLETGKPESPAPVASRSSKPSMQADMFAEPQPSKVEKRLATVIPDDLSPRQALELVYELKKLI.

621-628 (GPNMGGKS) serves as a coordination point for ATP. The tract at residues 804–833 (ETGKPESPAPVASRSSKPSMQADMFAEPQP) is disordered.

The protein belongs to the DNA mismatch repair MutS family.

Functionally, this protein is involved in the repair of mismatches in DNA. It is possible that it carries out the mismatch recognition step. This protein has a weak ATPase activity. The protein is DNA mismatch repair protein MutS of Teredinibacter turnerae (strain ATCC 39867 / T7901).